Reading from the N-terminus, the 435-residue chain is Endoglucanase EG-1 (435 aa).

The N-terminal stretch at 1–20 (MARGTALLGLTSLLLGLVNG) is a signal peptide. Gln-21 carries the post-translational modification Pyrrolidone carboxylic acid. Disulfide bonds link Cys-38/Cys-44, Cys-71/Cys-93, and Cys-83/Cys-89. Asn-109 carries N-linked (GlcNAc...) asparagine glycosylation. Disulfide bonds link Cys-160–Cys-385, Cys-192–Cys-215, Cys-196–Cys-214, Cys-235–Cys-254, Cys-243–Cys-248, and Cys-259–Cys-335. The active-site Nucleophile is Glu-217. The active-site Proton donor is Glu-222. An N-linked (GlcNAc...) asparagine glycan is attached at Asn-267.

Belongs to the glycosyl hydrolase 7 (cellulase C) family.

It is found in the secreted. It catalyses the reaction Endohydrolysis of (1-&gt;4)-beta-D-glucosidic linkages in cellulose, lichenin and cereal beta-D-glucans.. Functionally, the biological conversion of cellulose to glucose generally requires three types of hydrolytic enzymes: (1) Endoglucanases which cut internal beta-1,4-glucosidic bonds; (2) Exocellobiohydrolases that cut the disaccharide cellobiose from the non-reducing end of the cellulose polymer chain; (3) Beta-1,4-glucosidases which hydrolyze the cellobiose and other short cello-oligosaccharides to glucose. This is Endoglucanase EG-1 (EG-1) from Humicola insolens (Soft-rot fungus).